A 581-amino-acid polypeptide reads, in one-letter code: MIKRALAPIVQPQRLFAALMVIGGGGRSATTTTTTTTKACGNGSSQSPPSTPLLSSKSSTITSNKKSAIPSSHLYIPKKSTLDSRQIGNYSREYSTSSSSSSKKSIFNDTYLNDLFWQLSSQGPAFEVNPNNIDFIQEPIDFYNHLIDGVKRSKKRITMASLYLGTSKQEIELVKEMKLAMERNKELKIHILLDGLRGTRIGLDKESSATILGELLSLYSDRVTISMYHTPDLNGILKKVLPPRINETIGVQHIKTYIFDDDLLLSGANLSKDYFTNRQDRYVLIRSTSTVSNYFNEIVEIIGSLSLHVDKDNRNQLLLSSGSIDPVTQSNEFKNLAYTKLSTLLKSHSYYPSNSNSNSSVDSPFDCNNINNGETTWIFPTIQMGPFNIRQDEVVTSHIFESVPNDSKFFITSPYFNLTENYLNLILTGKPKLDIITCSPQANGFYGSKGLSSAVPDCYAIIEKRFLQRVQDTDNGDRISVQEYIRDKWTYHAKGLWIQVKNQQHPSITLIGSPNFGSRSVEKDLEAQIILITQNKQLQQKMENEKNYLWTDTQNANLELFEKRKVSLMVRFLVYIFGNYL.

Residues 27 to 65 (RSATTTTTTTTKACGNGSSQSPPSTPLLSSKSSTITSNK) are disordered. Positions 44–65 (SSQSPPSTPLLSSKSSTITSNK) are enriched in low complexity. Residue 160–167 (ASLYLGTS) participates in ATP binding. 2 PLD phosphodiesterase domains span residues 248-274 (TIGV…SKDY) and 487-520 (DKWT…GSRS). Residues H253, K255, and D260 contribute to the active site.

It belongs to the CDP-alcohol phosphatidyltransferase class-II family.

The catalysed reaction is a CDP-1,2-diacyl-sn-glycerol + sn-glycerol 3-phosphate = a 1,2-diacyl-sn-glycero-3-phospho-(1'-sn-glycero-3'-phosphate) + CMP + H(+). It participates in phospholipid metabolism; phosphatidylglycerol biosynthesis; phosphatidylglycerol from CDP-diacylglycerol: step 1/2. Its function is as follows. Functions in the biosynthesis of the anionic phospholipids phosphatidylglycerol and cardiolipin. The protein is Probable CDP-diacylglycerol--glycerol-3-phosphate 3-phosphatidyltransferase (pgs1) of Dictyostelium discoideum (Social amoeba).